We begin with the raw amino-acid sequence, 207 residues long: Guanylate kinase (207 aa).

Residues 5 to 184 form the Guanylate kinase-like domain; it reads GNLFIVSAPS…ALADLVAIIR (180 aa). 12 to 19 is an ATP binding site; the sequence is APSGAGKS.

It belongs to the guanylate kinase family.

The protein resides in the cytoplasm. The enzyme catalyses GMP + ATP = GDP + ADP. Functionally, essential for recycling GMP and indirectly, cGMP. This is Guanylate kinase from Shewanella violacea (strain JCM 10179 / CIP 106290 / LMG 19151 / DSS12).